A 159-amino-acid chain; its full sequence is MEGEGLLVRKIRSGVVIDHIPPGRAFTMLKALGLLPPRGYRWRIAVVINAESSKLGRKDILKIEGYKPRQRDLEVLGIIAPGATFNVIEDYKVVEKVKLKLPEESQGVLRCPNPTCITRKEREKAVSKMVLVSQDPPAYRCVYCGTTVMGDEIHDLISP.

Zn(2+) contacts are provided by C111, C116, C141, and C144.

The protein belongs to the PyrI family. As to quaternary structure, contains catalytic and regulatory chains. The cofactor is Zn(2+).

In terms of biological role, involved in allosteric regulation of aspartate carbamoyltransferase. This is Aspartate carbamoyltransferase regulatory chain from Aeropyrum pernix (strain ATCC 700893 / DSM 11879 / JCM 9820 / NBRC 100138 / K1).